The primary structure comprises 199 residues: MTTLTAQQIACVYAWLAQLFSRELDDEQLTQIASAQMAEWFSLLKSEPPLAAAVNELENCIATLTVRDDARLELAADFCGLFLMTDKQAALPYASAYKQDEQEIKRLLVEAGMETSGNFNEPADHLAIYLELLSHLHFSLGEGTVPARRIDSLRQKTLTALWQWLPEFVVRCRQYDSFGFYAALSQLLLVLVESDHQNR.

The protein belongs to the TorD/DmsD family. TorD subfamily.

It localises to the cytoplasm. Functionally, involved in the biogenesis of TorA. Acts on TorA before the insertion of the molybdenum cofactor and, as a result, probably favors a conformation of the apoenzyme that is competent for acquiring the cofactor. This is Chaperone protein TorD from Escherichia coli O139:H28 (strain E24377A / ETEC).